A 145-amino-acid polypeptide reads, in one-letter code: Large ribosomal subunit protein uL13 (145 aa).

It belongs to the universal ribosomal protein uL13 family. Part of the 50S ribosomal subunit.

Functionally, this protein is one of the early assembly proteins of the 50S ribosomal subunit, although it is not seen to bind rRNA by itself. It is important during the early stages of 50S assembly. The sequence is that of Large ribosomal subunit protein uL13 from Geobacillus thermodenitrificans (strain NG80-2).